A 471-amino-acid chain; its full sequence is Ribulose bisphosphate carboxylase large chain (471 aa).

Residue K5 is modified to N6,N6,N6-trimethyllysine. N114 and T164 together coordinate substrate. The active-site Proton acceptor is the K166. A substrate-binding site is contributed by K168. 3 residues coordinate Mg(2+): K192, D194, and E195. K192 carries the post-translational modification N6-carboxylysine. Residue H285 is the Proton acceptor of the active site. Residues R286, H318, and S370 each contribute to the substrate site.

The protein belongs to the RuBisCO large chain family. Type I subfamily. Heterohexadecamer of 8 large chains and 8 small chains; disulfide-linked. The disulfide link is formed within the large subunit homodimers. It depends on Mg(2+) as a cofactor. Post-translationally, the disulfide bond which can form in the large chain dimeric partners within the hexadecamer appears to be associated with oxidative stress and protein turnover.

It localises to the plastid. Its subcellular location is the chloroplast. The enzyme catalyses 2 (2R)-3-phosphoglycerate + 2 H(+) = D-ribulose 1,5-bisphosphate + CO2 + H2O. It carries out the reaction D-ribulose 1,5-bisphosphate + O2 = 2-phosphoglycolate + (2R)-3-phosphoglycerate + 2 H(+). Functionally, ruBisCO catalyzes two reactions: the carboxylation of D-ribulose 1,5-bisphosphate, the primary event in carbon dioxide fixation, as well as the oxidative fragmentation of the pentose substrate in the photorespiration process. Both reactions occur simultaneously and in competition at the same active site. The protein is Ribulose bisphosphate carboxylase large chain of Chiococca alba (West Indian milkberry).